Reading from the N-terminus, the 331-residue chain is Benzylsuccinate synthase activating enzyme (331 aa).

In terms of domain architecture, Radical SAM core spans 15–315 (QDGPGIRTTI…VTIGGIVGIA (301 aa)). [4Fe-4S] cluster is bound by residues Cys-29, Cys-33, Cys-36, Cys-55, Cys-58, Cys-61, Cys-65, Cys-89, Cys-92, Cys-95, and Cys-99. 35 to 37 (WCH) is an S-adenosyl-L-methionine binding site. 2 4Fe-4S ferredoxin-type domains span residues 46 to 75 (QEFYFYPDRCVGCGRCVAVCPAETSRLVRN) and 80 to 109 (TIVQIDRTNCQRCMRCVAACLTEARAIVGQ). S-adenosyl-L-methionine-binding positions include Gly-139, 189-191 (DLK), and His-263.

This sequence belongs to the organic radical-activating enzymes family. [4Fe-4S] cluster is required as a cofactor.

It catalyses the reaction glycyl-[protein] + reduced [flavodoxin] + S-adenosyl-L-methionine = glycin-2-yl radical-[protein] + semiquinone [flavodoxin] + 5'-deoxyadenosine + L-methionine + H(+). It functions in the pathway xenobiotic degradation; toluene degradation [regulation]. In terms of biological role, activation of benzylsuccinate synthase under anaerobic conditions by generation of an organic free radical, using S-adenosylmethionine and reduced flavodoxin as cosubstrates to produce 5'-deoxy-adenosine. This Thauera aromatica protein is Benzylsuccinate synthase activating enzyme (bssD).